Reading from the N-terminus, the 230-residue chain is Eukaryotic translation initiation factor 4E-1 (230 aa).

Residues 1–53 (MVVEDSQKSTITDEQNPSRVDNDDDDLEDGEILEDADDAASAASKPPSAFLRN) form a disordered region. A compositionally biased stretch (polar residues) spans 8 to 19 (KSTITDEQNPSR). Positions 22–38 (NDDDDLEDGEILEDADD) are enriched in acidic residues. Residues 39 to 49 (AASAASKPPSA) show a composition bias toward low complexity. 2 EIF4G-binding regions span residues 55 to 58 (HPLE) and 65 to 101 (FDNP…NNIH). Residues 73–78 (KQAAWG), Lys-105, and 123–124 (WE) contribute to the mRNA site. Residues Cys-128 and Cys-166 are joined by a disulfide bond. Residues 149–158 (YTLLAMIGEQ) form an EIF4G-binding region. Residues 173 to 178 (RNRQDK) and 218 to 222 (KKHER) contribute to the mRNA site.

It belongs to the eukaryotic initiation factor 4E family. As to quaternary structure, EIF4F is a multi-subunit complex, the composition of which varies with external and internal environmental conditions. It is composed of at least EIF4A, EIF4E and EIF4G. EIF4E is also known to interact with other partners. In higher plants two isoforms of EIF4F have been identified, named isoform EIF4F and isoform EIF(iso)4F. Isoform EIF4F has subunits p220 and p26, whereas isoform EIF(iso)4F has subunits p82 and p28. (Microbial infection) Interacts with potyvirus viral genome-linked protein (VPg); this interaction is possible in susceptible hosts but impaired in resistant plants. In terms of processing, according to the redox status, the Cys-128-Cys-166 disulfide bridge may have a role in regulating protein function by affecting its ability to bind capped mRNA.

It localises to the nucleus. Its subcellular location is the cytoplasm. Its function is as follows. Component of the protein complex eIF4F, which is involved in the recognition of the mRNA cap, ATP-dependent unwinding of 5'-terminal secondary structure and recruitment of mRNA to the ribosome. Recognizes and binds the 7-methylguanosine-containing mRNA cap during an early step in the initiation of protein synthesis and facilitates ribosome binding by inducing the unwinding of the mRNAs secondary structures. Key component of recessive resistance to potyviruses. In terms of biological role, (Microbial infection) Susceptibility host factor required for viral infection by recruiting viral RNAs to the host ribosomal complex via an interaction with viral genome-linked protein (VPg). The polypeptide is Eukaryotic translation initiation factor 4E-1 (Phaseolus vulgaris (Kidney bean)).